Consider the following 220-residue polypeptide: Deoxyribose-phosphate aldolase (220 aa).

The active-site Proton donor/acceptor is Asp89. The active-site Schiff-base intermediate with acetaldehyde is Lys152. Catalysis depends on Lys181, which acts as the Proton donor/acceptor.

It belongs to the DeoC/FbaB aldolase family. DeoC type 1 subfamily.

It localises to the cytoplasm. The catalysed reaction is 2-deoxy-D-ribose 5-phosphate = D-glyceraldehyde 3-phosphate + acetaldehyde. The protein operates within carbohydrate degradation; 2-deoxy-D-ribose 1-phosphate degradation; D-glyceraldehyde 3-phosphate and acetaldehyde from 2-deoxy-alpha-D-ribose 1-phosphate: step 2/2. In terms of biological role, catalyzes a reversible aldol reaction between acetaldehyde and D-glyceraldehyde 3-phosphate to generate 2-deoxy-D-ribose 5-phosphate. This chain is Deoxyribose-phosphate aldolase, found in Enterococcus faecalis (strain ATCC 700802 / V583).